The following is a 254-amino-acid chain: UPF0246 protein FTH_1656 (254 aa).

It belongs to the UPF0246 family.

This chain is UPF0246 protein FTH_1656, found in Francisella tularensis subsp. holarctica (strain OSU18).